Reading from the N-terminus, the 634-residue chain is Probable potassium transport system protein Kup (634 aa).

A run of 12 helical transmembrane segments spans residues 19-39, 62-82, 113-133, 150-170, 177-197, 225-245, 259-279, 291-311, 349-369, 379-399, 406-426, and 431-451; these read AVGLMVGAVGVCYGDIGTSPL, VLSLIFWSLIWVVSIKYVIFV, FVVVAGLIGAALFYGDSMITP, GLEHWTVPLALIVLIGLFLIQ, IGILFGPVMVLWFGALAALGV, IGVAILGATVLALTGAEALYA, WFLLVLPALVLNYFGQGATIL, LLAPGWALLPMVALSTLATVI, IYIGGVNWALMVGVVLLVLGF, YGVAVTGTMLITTLLMGVVIW, LWLGVPFFCVMLAVDSLFFAA, and VVQGGAFPVIAGIVIFILMST.

Belongs to the HAK/KUP transporter (TC 2.A.72) family.

Its subcellular location is the cell inner membrane. It carries out the reaction K(+)(in) + H(+)(in) = K(+)(out) + H(+)(out). In terms of biological role, transport of potassium into the cell. Likely operates as a K(+):H(+) symporter. The chain is Probable potassium transport system protein Kup from Pseudomonas paraeruginosa (strain DSM 24068 / PA7) (Pseudomonas aeruginosa (strain PA7)).